We begin with the raw amino-acid sequence, 364 residues long: Phosphoserine aminotransferase (364 aa).

Arginine 42 provides a ligand contact to L-glutamate. Residues 76–77 (GR), tryptophan 102, threonine 156, aspartate 175, and glutamine 198 contribute to the pyridoxal 5'-phosphate site. The residue at position 199 (lysine 199) is an N6-(pyridoxal phosphate)lysine. 240–241 (NT) contacts pyridoxal 5'-phosphate.

It belongs to the class-V pyridoxal-phosphate-dependent aminotransferase family. SerC subfamily. In terms of assembly, homodimer. The cofactor is pyridoxal 5'-phosphate.

The protein localises to the cytoplasm. It carries out the reaction O-phospho-L-serine + 2-oxoglutarate = 3-phosphooxypyruvate + L-glutamate. The catalysed reaction is 4-(phosphooxy)-L-threonine + 2-oxoglutarate = (R)-3-hydroxy-2-oxo-4-phosphooxybutanoate + L-glutamate. Its pathway is amino-acid biosynthesis; L-serine biosynthesis; L-serine from 3-phospho-D-glycerate: step 2/3. It functions in the pathway cofactor biosynthesis; pyridoxine 5'-phosphate biosynthesis; pyridoxine 5'-phosphate from D-erythrose 4-phosphate: step 3/5. In terms of biological role, catalyzes the reversible conversion of 3-phosphohydroxypyruvate to phosphoserine and of 3-hydroxy-2-oxo-4-phosphonooxybutanoate to phosphohydroxythreonine. The polypeptide is Phosphoserine aminotransferase (Shewanella sediminis (strain HAW-EB3)).